The sequence spans 213 residues: Putative 3-methyladenine DNA glycosylase (213 aa).

Belongs to the DNA glycosylase MPG family.

The polypeptide is Putative 3-methyladenine DNA glycosylase (Leifsonia xyli subsp. xyli (strain CTCB07)).